A 57-amino-acid polypeptide reads, in one-letter code: UPF0509 protein YciZ (57 aa).

Belongs to the UPF0509 family.

The sequence is that of UPF0509 protein YciZ from Escherichia coli O127:H6 (strain E2348/69 / EPEC).